We begin with the raw amino-acid sequence, 238 residues long: Large ribosomal subunit protein uL2 (238 aa).

The segment covering 1 to 11 (MGKRLISQNRG) has biased composition (polar residues). 2 disordered regions span residues 1-22 (MGKRLISQNRGRGTPTYRAPSH) and 202-223 (FGGGAWKHPGKPTTVSRNAPPG).

This sequence belongs to the universal ribosomal protein uL2 family. Part of the 50S ribosomal subunit. Forms a bridge to the 30S subunit in the 70S ribosome.

In terms of biological role, one of the primary rRNA binding proteins. Required for association of the 30S and 50S subunits to form the 70S ribosome, for tRNA binding and peptide bond formation. It has been suggested to have peptidyltransferase activity; this is somewhat controversial. Makes several contacts with the 16S rRNA in the 70S ribosome. This Methanosarcina mazei (strain ATCC BAA-159 / DSM 3647 / Goe1 / Go1 / JCM 11833 / OCM 88) (Methanosarcina frisia) protein is Large ribosomal subunit protein uL2.